The sequence spans 242 residues: Pyridoxine 5'-phosphate synthase (242 aa).

Asparagine 6 contacts 3-amino-2-oxopropyl phosphate. 8–9 (DH) contacts 1-deoxy-D-xylulose 5-phosphate. Arginine 17 provides a ligand contact to 3-amino-2-oxopropyl phosphate. Histidine 42 (proton acceptor) is an active-site residue. 1-deoxy-D-xylulose 5-phosphate contacts are provided by arginine 44 and histidine 49. Glutamate 69 (proton acceptor) is an active-site residue. Threonine 99 is a binding site for 1-deoxy-D-xylulose 5-phosphate. Histidine 190 (proton donor) is an active-site residue. 3-amino-2-oxopropyl phosphate contacts are provided by residues glycine 191 and 212–213 (GH).

It belongs to the PNP synthase family. Homooctamer; tetramer of dimers.

It is found in the cytoplasm. It carries out the reaction 3-amino-2-oxopropyl phosphate + 1-deoxy-D-xylulose 5-phosphate = pyridoxine 5'-phosphate + phosphate + 2 H2O + H(+). Its pathway is cofactor biosynthesis; pyridoxine 5'-phosphate biosynthesis; pyridoxine 5'-phosphate from D-erythrose 4-phosphate: step 5/5. Its function is as follows. Catalyzes the complicated ring closure reaction between the two acyclic compounds 1-deoxy-D-xylulose-5-phosphate (DXP) and 3-amino-2-oxopropyl phosphate (1-amino-acetone-3-phosphate or AAP) to form pyridoxine 5'-phosphate (PNP) and inorganic phosphate. The chain is Pyridoxine 5'-phosphate synthase from Neisseria meningitidis serogroup A / serotype 4A (strain DSM 15465 / Z2491).